The chain runs to 1251 residues: ATP-dependent helicase/nuclease subunit A (1251 aa).

The region spanning 5-481 (TKWTDEQWEA…IILSRNFRSR (477 aa)) is the UvrD-like helicase ATP-binding domain. ATP is bound at residue 26 to 33 (AAAGAGKT). Residues 526–824 (TVGGEVEFHL…RIMSIHKSKG (299 aa)) enclose the UvrD-like helicase C-terminal domain. The segment at 544–565 (NFTFENEGEEGRQADEGEEDEE) is disordered.

Belongs to the helicase family. AddA subfamily. Heterodimer of AddA and AddB/RexB. The cofactor is Mg(2+).

The enzyme catalyses Couples ATP hydrolysis with the unwinding of duplex DNA by translocating in the 3'-5' direction.. It catalyses the reaction ATP + H2O = ADP + phosphate + H(+). Functionally, the heterodimer acts as both an ATP-dependent DNA helicase and an ATP-dependent, dual-direction single-stranded exonuclease. Recognizes the chi site generating a DNA molecule suitable for the initiation of homologous recombination. The AddA nuclease domain is required for chi fragment generation; this subunit has the helicase and 3' -&gt; 5' nuclease activities. This is ATP-dependent helicase/nuclease subunit A from Acetivibrio thermocellus (strain ATCC 27405 / DSM 1237 / JCM 9322 / NBRC 103400 / NCIMB 10682 / NRRL B-4536 / VPI 7372) (Clostridium thermocellum).